Here is a 593-residue protein sequence, read N- to C-terminus: Isocitrate dehydrogenase kinase/phosphatase (593 aa).

Residues 324-330 (APGIRGL) and Lys-345 each bind ATP. Residue Asp-380 is part of the active site.

The protein belongs to the AceK family.

The protein resides in the cytoplasm. It catalyses the reaction L-seryl-[isocitrate dehydrogenase] + ATP = O-phospho-L-seryl-[isocitrate dehydrogenase] + ADP + H(+). In terms of biological role, bifunctional enzyme which can phosphorylate or dephosphorylate isocitrate dehydrogenase (IDH) on a specific serine residue. This is a regulatory mechanism which enables bacteria to bypass the Krebs cycle via the glyoxylate shunt in response to the source of carbon. When bacteria are grown on glucose, IDH is fully active and unphosphorylated, but when grown on acetate or ethanol, the activity of IDH declines drastically concomitant with its phosphorylation. The polypeptide is Isocitrate dehydrogenase kinase/phosphatase (Dechloromonas aromatica (strain RCB)).